A 372-amino-acid chain; its full sequence is DNA primase small subunit PriS (372 aa).

Residues Asp-95, Asp-97, and Asp-280 contribute to the active site.

It belongs to the eukaryotic-type primase small subunit family. In terms of assembly, heterodimer of a small subunit (PriS) and a large subunit (PriL). It depends on Mg(2+) as a cofactor. Mn(2+) serves as cofactor.

Catalytic subunit of DNA primase, an RNA polymerase that catalyzes the synthesis of short RNA molecules used as primers for DNA polymerase during DNA replication. The small subunit contains the primase catalytic core and has DNA synthesis activity on its own. Binding to the large subunit stabilizes and modulates the activity, increasing the rate of DNA synthesis while decreasing the length of the DNA fragments, and conferring RNA synthesis capability. The DNA polymerase activity may enable DNA primase to also catalyze primer extension after primer synthesis. May also play a role in DNA repair. In Cenarchaeum symbiosum (strain A), this protein is DNA primase small subunit PriS.